Reading from the N-terminus, the 479-residue chain is MNFETIIGLEVHVELNTNSKIFSPSSAHFGEDPNANTNVIDWSFPGVLPVMNKGVIDAGIKAALALNMDIHKEMHFDRKNYFYPDNPKAYQISQFDEPIGYNGWIDIKLEDGSTKKIRIERAHLEEDAGKNTHGTDGYSYVDLNRQGVPLIEIVSEADMRSPEEAYAYLTALKEIIQYTGISDVKMEEGSMRVDANISLRPYGQEQFGTKTELKNLNSFSNVRKGLEFEVERQAKLLRSGGAIRQETRRYDEANKGTILMRVKEGAADYRYFPEPDLPLYEIDDAWIDEMRAQLPQFPAQRRAKYEEELGLSAYDASQLTATKALSDFFETAVSLGGDAKQVSNWLQGEVAQFLNAEGKTIEEIALTPENLVEMIAIIADGTISSKMAKKVFVHLAKNGGSARAYVEKAGLVQISDPAVLVPIIHQVFADNEAAVADFKSGKRNADKAFTGFLMKATKGQANPQVAQQLLAQELQKLRD.

This sequence belongs to the GatB/GatE family. GatB subfamily. In terms of assembly, heterotrimer of A, B and C subunits.

The catalysed reaction is L-glutamyl-tRNA(Gln) + L-glutamine + ATP + H2O = L-glutaminyl-tRNA(Gln) + L-glutamate + ADP + phosphate + H(+). It catalyses the reaction L-aspartyl-tRNA(Asn) + L-glutamine + ATP + H2O = L-asparaginyl-tRNA(Asn) + L-glutamate + ADP + phosphate + 2 H(+). Allows the formation of correctly charged Asn-tRNA(Asn) or Gln-tRNA(Gln) through the transamidation of misacylated Asp-tRNA(Asn) or Glu-tRNA(Gln) in organisms which lack either or both of asparaginyl-tRNA or glutaminyl-tRNA synthetases. The reaction takes place in the presence of glutamine and ATP through an activated phospho-Asp-tRNA(Asn) or phospho-Glu-tRNA(Gln). In Streptococcus pyogenes serotype M49 (strain NZ131), this protein is Aspartyl/glutamyl-tRNA(Asn/Gln) amidotransferase subunit B.